The sequence spans 268 residues: MICOS complex subunit MIC27 (268 aa).

The transit peptide at 1 to 27 (MAAIRMGKLTTMPAGLIYASVSVHAAK) directs the protein to the mitochondrion. Residues 28–110 (QEESKKQLVK…YVYLKNPPRD (83 aa)) are Mitochondrial intermembrane-facing. Residues 111 to 129 (FLPKMGVITVSGLAGLVSA) form a helical membrane-spanning segment. Over 130-137 (RKGSKFKK) the chain is Mitochondrial matrix. A helical membrane pass occupies residues 138–155 (ITYPLGLATLGATVCYPV). Over 156–268 (QSVIIAKVTA…EDIDMYSTRS (113 aa)) the chain is Mitochondrial intermembrane. Residues 187–200 (SKEESLPKPKEKTK) show a composition bias toward basic and acidic residues. The interval 187-268 (SKEESLPKPK…EDIDMYSTRS (82 aa)) is disordered. S204 bears the Phosphoserine mark. The segment covering 249–260 (KLMDHGQSHPED) has biased composition (basic and acidic residues).

The protein belongs to the apolipoprotein O/MICOS complex subunit Mic27 family. As to quaternary structure, component of the mitochondrial contact site and cristae organizing system (MICOS) complex, composed of at least MICOS10/MIC10, CHCHD3/MIC19, CHCHD6/MIC25, APOOL/MIC27, IMMT/MIC60, APOO/MIC23/MIC26 and MICOS13/MIC13. This complex was also known under the names MINOS or MitOS complex. The MICOS complex associates with mitochondrial outer membrane proteins SAMM50, MTX1 and MTX2 (together described as components of the mitochondrial outer membrane sorting assembly machinery (SAM) complex) and DNAJC11, mitochondrial inner membrane protein TMEM11 and with HSPA9. The MICOS and SAM complexes together with DNAJC11 are part of a large protein complex spanning both membranes termed the mitochondrial intermembrane space bridging (MIB) complex. Interacts with MICOS10/MIC10, IMMT/MIC60 and APOO/MIC23/MIC26.

The protein resides in the mitochondrion inner membrane. Its subcellular location is the mitochondrion. Functionally, component of the MICOS complex, a large protein complex of the mitochondrial inner membrane that plays crucial roles in the maintenance of crista junctions, inner membrane architecture, and formation of contact sites to the outer membrane. Specifically binds to cardiolipin (in vitro) but not to the precursor lipid phosphatidylglycerol. Plays a crucial role in crista junction formation and mitochondrial function,. This is MICOS complex subunit MIC27 (APOOL) from Homo sapiens (Human).